Consider the following 457-residue polypeptide: Chromosomal replication initiator protein DnaA (457 aa).

The segment at 1 to 90 (MDTNNNIEKE…HSVDVRIEVA (90 aa)) is domain I, interacts with DnaA modulators. The tract at residues 91-112 (PKIQINAQSNINYKAIKTSVKD) is domain II. The domain III, AAA+ region stretch occupies residues 113 to 323 (SYTFENFVVG…GAIIKISVNA (211 aa)). 4 residues coordinate ATP: glycine 153, glycine 155, lysine 156, and threonine 157. The domain IV, binds dsDNA stretch occupies residues 324-457 (NLMNASIDLN…DKKTAFNSSE (134 aa)).

It belongs to the DnaA family. Oligomerizes as a right-handed, spiral filament on DNA at oriC. Interacts via domain I with HobA. In a crystal with domains I and II of DnaA HobA forms tetramers with DnaA fragments bound at the dimer interface of the tetramer.

It is found in the cytoplasm. It localises to the cell inner membrane. Its function is as follows. Plays an essential role in the initiation and regulation of chromosomal replication. ATP-DnaA binds to the origin of replication (oriC) to initiate formation of the DNA replication initiation complex once per cell cycle. Binds the DnaA box (a 9 base pair repeat at the origin) and separates the double-stranded (ds)DNA. Forms a right-handed helical filament on oriC DNA; dsDNA binds to the exterior of the filament while single-stranded (ss)DNA is stabiized in the filament's interior. The ATP-DnaA-oriC complex binds and stabilizes one strand of the AT-rich DNA unwinding element (DUE), permitting loading of DNA polymerase. After initiation quickly degrades to an ADP-DnaA complex that is not apt for DNA replication. Binds acidic phospholipids. The DnaA box is 5'-TTATC[CA]A[CA]A-3' in this bacterium cycle. Multiple discrete DnaA-oriC complexes can be seen as DnaA levels increase. Binding of DnaA to oriC is increased by HobA; some chi-type structures can be seen by electron microscopy. Strand separation requires the DnaA boxes and adjacent DnaA-trio motifs but works equally well with ADP or ATP. In Helicobacter pylori (strain ATCC 700392 / 26695) (Campylobacter pylori), this protein is Chromosomal replication initiator protein DnaA.